The following is a 322-amino-acid chain: 1-aminocyclopropane-1-carboxylate oxidase 1 (322 aa).

Residues 159 to 259 (PTFGTKVSSY…RMSIASFYNP (101 aa)) form the Fe2OG dioxygenase domain. The Fe cation site is built by histidine 183, aspartate 185, and histidine 240.

It belongs to the iron/ascorbate-dependent oxidoreductase family. The cofactor is Fe cation.

It catalyses the reaction 1-aminocyclopropane-1-carboxylate + L-ascorbate + O2 = ethene + L-dehydroascorbate + hydrogen cyanide + CO2 + 2 H2O. It functions in the pathway alkene biosynthesis; ethylene biosynthesis via S-adenosyl-L-methionine; ethylene from S-adenosyl-L-methionine: step 2/2. The chain is 1-aminocyclopropane-1-carboxylate oxidase 1 (ACO1) from Oryza sativa subsp. japonica (Rice).